A 670-amino-acid polypeptide reads, in one-letter code: DNA ligase (670 aa).

NAD(+) is bound by residues 33–37 (DAEYD), 82–83 (SL), and glutamate 114. The N6-AMP-lysine intermediate role is filled by lysine 116. Positions 137, 174, 291, and 315 each coordinate NAD(+). 4 residues coordinate Zn(2+): cysteine 409, cysteine 412, cysteine 427, and cysteine 433. Residues 593–670 (GVELPLEGKT…TEQDLLNLMK (78 aa)) enclose the BRCT domain.

This sequence belongs to the NAD-dependent DNA ligase family. LigA subfamily. Mg(2+) serves as cofactor. It depends on Mn(2+) as a cofactor.

It carries out the reaction NAD(+) + (deoxyribonucleotide)n-3'-hydroxyl + 5'-phospho-(deoxyribonucleotide)m = (deoxyribonucleotide)n+m + AMP + beta-nicotinamide D-nucleotide.. In terms of biological role, DNA ligase that catalyzes the formation of phosphodiester linkages between 5'-phosphoryl and 3'-hydroxyl groups in double-stranded DNA using NAD as a coenzyme and as the energy source for the reaction. It is essential for DNA replication and repair of damaged DNA. The protein is DNA ligase of Vibrio campbellii (strain ATCC BAA-1116).